A 144-amino-acid polypeptide reads, in one-letter code: Large ribosomal subunit protein uL15 (144 aa).

The segment at 1 to 51 (MRLNTLSPAEGAKHSAKRLGRGIGSGLGKTGGRGHKGQKSRTGGKVRRGFE) is disordered. The span at 21–31 (RGIGSGLGKTG) shows a compositional bias: gly residues. Basic residues predominate over residues 32–47 (GRGHKGQKSRTGGKVR).

It belongs to the universal ribosomal protein uL15 family. Part of the 50S ribosomal subunit.

Its function is as follows. Binds to the 23S rRNA. In Actinobacillus succinogenes (strain ATCC 55618 / DSM 22257 / CCUG 43843 / 130Z), this protein is Large ribosomal subunit protein uL15.